Here is a 284-residue protein sequence, read N- to C-terminus: Isopentenyl-diphosphate delta-isomerase (284 aa).

K77 is a substrate binding site. Positions 81 and 92 each coordinate Mg(2+). One can recognise a Nudix hydrolase domain in the interval 90 to 256 (LLHRAFSVFL…SLVFTPWFKL (167 aa)). R111 and K115 together coordinate substrate. The active site involves C127. S128 contacts substrate. The Nudix box motif lies at 128 to 172 (SHPLCVPSELGVDSSLEGSKDVNNLTNAVKGAKVAAQRKLEHELG). The Mg(2+) site is built by E204 and E206. E206 is a catalytic residue.

Belongs to the IPP isomerase type 1 family. The cofactor is Mg(2+).

Its subcellular location is the cytoplasm. The enzyme catalyses isopentenyl diphosphate = dimethylallyl diphosphate. Its pathway is isoprenoid biosynthesis; dimethylallyl diphosphate biosynthesis; dimethylallyl diphosphate from isopentenyl diphosphate: step 1/1. Functionally, isopentenyl-diphosphate delta-isomerase; part of the second module of ergosterol biosynthesis pathway that includes the middle steps of the pathway. IDI1 catalyzes the 1,3-allylic rearrangement of isopentenyl (IPP) to its highly electrophilic allylic isomer, dimethylallyl diphosphate (DMAPP). The second module is carried out in the vacuole and involves the formation of farnesyl diphosphate, which is also an important intermediate in the biosynthesis of ubiquinone, dolichol, heme and prenylated proteins. Activity by the mevalonate kinase ERG12 first converts mevalonate into 5-phosphomevalonate. 5-phosphomevalonate is then further converted to 5-diphosphomevalonate by the phosphomevalonate kinase ERG8. The diphosphomevalonate decarboxylase MVD then produces isopentenyl diphosphate. The isopentenyl-diphosphate delta-isomerase IDI1 then catalyzes the 1,3-allylic rearrangement of the homoallylic substrate isopentenyl (IPP) to its highly electrophilic allylic isomer, dimethylallyl diphosphate (DMAPP). Finally the farnesyl diphosphate synthase ERG20 catalyzes the sequential condensation of isopentenyl pyrophosphate with dimethylallyl pyrophosphate, and then with the resultant geranylpyrophosphate to the ultimate product farnesyl pyrophosphate. This is Isopentenyl-diphosphate delta-isomerase from Candida albicans (strain SC5314 / ATCC MYA-2876) (Yeast).